The sequence spans 3859 residues: Transformation/transcription domain-associated protein (3859 aa).

Ala-2 is modified (N-acetylalanine). Over residues Pro-491–Pro-526 the composition is skewed to pro residues. A disordered region spans residues Pro-491 to Phe-541. A compositionally biased stretch (basic and acidic residues) spans Lys-529–Gln-539. Phosphoserine is present on Ser-1628. Positions Ser-2010–Thr-2388 are interaction with TP53. Residues Asp-2023–Ser-2044 form a disordered region. Over residues Asn-2033 to Ser-2044 the composition is skewed to low complexity. The short motif at Lys-2047 to Arg-2062 is the Bipartite nuclear localization signal element. Phosphoserine is present on residues Ser-2051 and Ser-2077. A Glycyl lysine isopeptide (Lys-Gly) (interchain with G-Cter in SUMO2) cross-link involves residue Lys-2543. Positions Lys-2543–Ser-2554 are enriched in basic and acidic residues. Positions Lys-2543–Glu-2578 are disordered. One can recognise an FAT domain in the interval Val-2692–Thr-3275. Lys-3078 carries the N6-acetyllysine modification. The PI3K/PI4K catalytic domain maps to Met-3500–His-3823. Residues Val-3506–Ala-3512 form a G-loop region. Positions His-3687 to Met-3695 are catalytic loop. The segment at Val-3707–Thr-3732 is activation loop. One can recognise an FATC domain in the interval Gln-3827–Leu-3859.

This sequence belongs to the PI3/PI4-kinase family. TRA1 subfamily. Interacts with MYC, E2F1 and E2F4 transcription factors. Interacts directly with p53/TP53. Interacts with GCN5L2. Component of various HAT complexes. Component of the PCAF complex, at least composed of TADA2L/ADA2, SUPT3H, TADA3L/ADA3, TAF5L/PAF65-beta, TAF6L/PAF65-alpha, TAF10/TAFII30, TAF12/TAFII20, TAF9/TAFII31 and TRRAP. Component of the TFTC-HAT complex, at least composed of TAF5L, TAF6L, TADA3L, SUPT3H/SPT3, TAF2/TAFII150, TAF4/TAFII135, TAF5/TAFII100, GCN5L2/GCN5, TAF10 and TRRAP. Component of the NuA4 histone acetyltransferase complex which contains the catalytic subunit KAT5/TIP60 and the subunits EP400, TRRAP/PAF400, BRD8/SMAP, EPC1, DMAP1/DNMAP1, RUVBL1/TIP49, RUVBL2, ING3, actin, ACTL6A/BAF53A, MORF4L1/MRG15, MORF4L2/MRGX, MRGBP, YEATS4/GAS41, VPS72/YL1 and MEAF6. Component of the STAGA complex, at least composed of SUPT3H, GCN5L2, SUPT7L, TAF5L, TAF6L, TADA3L, TAD1L, TAF10, TAF12, TRRAP and TAF9. The STAGA core complex is associated with a subcomplex required for histone deubiquitination composed of ATXN7L3, ENY2 and USP22. Component of the BAF53 complex, at least composed of BAF53A, RUVBL1, SMARCA4/BRG1, and TRRAP, which preferentially acetylates histone H4 (and H2A) within nucleosomes. Interacts with NPAT. Interaction with TELO2 and TTI1. Component of a SWR1-like complex.

It is found in the nucleus. Adapter protein, which is found in various multiprotein chromatin complexes with histone acetyltransferase activity (HAT), which gives a specific tag for epigenetic transcription activation. Component of the NuA4 histone acetyltransferase complex which is responsible for acetylation of nucleosomal histones H4 and H2A. Plays a central role in MYC transcription activation, and also participates in cell transformation by MYC. Required for p53/TP53-, E2F1- and E2F4-mediated transcription activation. Also involved in transcription activation mediated by the adenovirus E1A, a viral oncoprotein that deregulates transcription of key genes. Probably acts by linking transcription factors such as E1A, MYC or E2F1 to HAT complexes such as STAGA thereby allowing transcription activation. Probably not required in the steps following histone acetylation in processes of transcription activation. May be required for the mitotic checkpoint and normal cell cycle progression. Component of a SWR1-like complex that specifically mediates the removal of histone H2A.Z/H2AZ1 from the nucleosome. May play a role in the formation and maintenance of the auditory system. The polypeptide is Transformation/transcription domain-associated protein (TRRAP) (Homo sapiens (Human)).